Reading from the N-terminus, the 244-residue chain is Carboxy-S-adenosyl-L-methionine synthase (244 aa).

S-adenosyl-L-methionine is bound by residues Tyr-41, 66-68 (GCS), 91-92 (DN), Asn-134, and Arg-201.

This sequence belongs to the class I-like SAM-binding methyltransferase superfamily. Cx-SAM synthase family. As to quaternary structure, homodimer.

It catalyses the reaction prephenate + S-adenosyl-L-methionine = carboxy-S-adenosyl-L-methionine + 3-phenylpyruvate + H2O. Its function is as follows. Catalyzes the conversion of S-adenosyl-L-methionine (SAM) to carboxy-S-adenosyl-L-methionine (Cx-SAM). The chain is Carboxy-S-adenosyl-L-methionine synthase from Colwellia psychrerythraea (strain 34H / ATCC BAA-681) (Vibrio psychroerythus).